A 750-amino-acid chain; its full sequence is Cellulose synthase-like protein H1 (750 aa).

2 consecutive transmembrane segments (helical) span residues 27 to 47 and 52 to 72; these read LAIL…DSGA and AALA…NAKW. Catalysis depends on residues aspartate 137 and aspartate 459. A run of 6 helical transmembrane segments spans residues 537–557, 570–590, 608–628, 664–684, 697–717, and 727–747; these read VWPV…YCLL, GFYI…MEFI, ITSA…TLGF, VFIP…VGAW, GPGI…MPLL, and GIPW…LLFC.

This sequence belongs to the glycosyltransferase 2 family. Plant cellulose synthase-like H subfamily.

The protein resides in the golgi apparatus membrane. In terms of biological role, thought to be a Golgi-localized beta-glycan synthase that polymerize the backbones of noncellulosic polysaccharides (hemicelluloses) of plant cell wall. The sequence is that of Cellulose synthase-like protein H1 (CSLH1) from Oryza sativa subsp. japonica (Rice).